The sequence spans 953 residues: Vacuolar membrane protease (953 aa).

Residues M1–P16 are Cytoplasmic-facing. The helical transmembrane segment at W17–I37 threads the bilayer. At H38–L382 the chain is on the vacuolar side. N-linked (GlcNAc...) asparagine glycans are attached at residues N53 and N115. Residues H165 and D177 each coordinate Zn(2+). The active-site Proton acceptor is E211. E212, E237, and H310 together coordinate Zn(2+). A helical transmembrane segment spans residues F383–I403. At L404–Y437 the chain is on the cytoplasmic side. Residues P438–F458 traverse the membrane as a helical segment. Over N459 to H464 the chain is Vacuolar. A helical membrane pass occupies residues S465–V485. At S486 to R499 the chain is on the cytoplasmic side. A helical transmembrane segment spans residues V500–Y520. Residues Q521–W524 lie on the Vacuolar side of the membrane. Residues A525–I545 form a helical membrane-spanning segment. At S546–Q650 the chain is on the cytoplasmic side. The tract at residues A570 to G599 is disordered. Positions E581–P591 are enriched in acidic residues. Residues F651–G671 form a helical membrane-spanning segment. The Vacuolar segment spans residues S672–L684. Residues F685–V705 form a helical membrane-spanning segment. Residues H706–H711 lie on the Cytoplasmic side of the membrane. The chain crosses the membrane as a helical span at residues I712–P732. Over F733–A953 the chain is Vacuolar. N779 is a glycosylation site (N-linked (GlcNAc...) asparagine).

It belongs to the peptidase M28 family. The cofactor is Zn(2+).

It localises to the vacuole membrane. In terms of biological role, may be involved in vacuolar sorting and osmoregulation. The chain is Vacuolar membrane protease from Emericella nidulans (strain FGSC A4 / ATCC 38163 / CBS 112.46 / NRRL 194 / M139) (Aspergillus nidulans).